The chain runs to 174 residues: Large ribosomal subunit protein bL17 (174 aa).

It belongs to the bacterial ribosomal protein bL17 family. In terms of assembly, part of the 50S ribosomal subunit. Contacts protein L32.

This is Large ribosomal subunit protein bL17 from Ruminiclostridium cellulolyticum (strain ATCC 35319 / DSM 5812 / JCM 6584 / H10) (Clostridium cellulolyticum).